Reading from the N-terminus, the 121-residue chain is uncharacterized protein (121 aa).

This is an uncharacterized protein from Aquifex aeolicus (strain VF5).